We begin with the raw amino-acid sequence, 466 residues long: ATP synthase subunit beta (466 aa).

148–155 is an ATP binding site; it reads GGAGVGKT.

Belongs to the ATPase alpha/beta chains family. As to quaternary structure, F-type ATPases have 2 components, CF(1) - the catalytic core - and CF(0) - the membrane proton channel. CF(1) has five subunits: alpha(3), beta(3), gamma(1), delta(1), epsilon(1). CF(0) has three main subunits: a(1), b(2) and c(9-12). The alpha and beta chains form an alternating ring which encloses part of the gamma chain. CF(1) is attached to CF(0) by a central stalk formed by the gamma and epsilon chains, while a peripheral stalk is formed by the delta and b chains.

Its subcellular location is the cell inner membrane. It catalyses the reaction ATP + H2O + 4 H(+)(in) = ADP + phosphate + 5 H(+)(out). Functionally, produces ATP from ADP in the presence of a proton gradient across the membrane. The catalytic sites are hosted primarily by the beta subunits. The chain is ATP synthase subunit beta from Xylella fastidiosa (strain M12).